The sequence spans 723 residues: Pescadillo homolog (723 aa).

The BRCT domain occupies 380–497 (EAGSLFATFT…KLLRPDLYAP (118 aa)). 2 disordered regions span residues 440 to 471 (RPQL…RVPG) and 501 to 723 (LPPH…LNKK). Residues 522-551 (LADQEEEGEAERAAEAEEYENDEQEESGEE) are a coiled coil. Acidic residues-rich tracts occupy residues 537-550 (AEEY…ESGE), 588-600 (MAED…DDGD), and 608-622 (FDQD…EDEE). Basic and acidic residues-rich tracts occupy residues 623–634 (EKARSQHQKELE), 670–681 (KKKEEEELERQK), and 700–709 (KKQDAEAEKL). Residues 656–723 (KKQQAPLAKK…RKIEQGLNKK (68 aa)) adopt a coiled-coil conformation. Positions 710–723 (RQKRRKIEQGLNKK) are enriched in basic residues.

It belongs to the pescadillo family. In terms of assembly, component of the NOP7 complex, composed of ERB1, NOP7 and YTM1. The complex is held together by ERB1, which interacts with NOP7 via its N-terminal domain and with YTM1 via a high-affinity interaction between the seven-bladed beta-propeller domains of the 2 proteins. The NOP7 complex associates with the 66S pre-ribosome.

It localises to the nucleus. It is found in the nucleolus. Its subcellular location is the nucleoplasm. Its function is as follows. Component of the NOP7 complex, which is required for maturation of the 25S and 5.8S ribosomal RNAs and formation of the 60S ribosome. In Ajellomyces capsulatus (strain NAm1 / WU24) (Darling's disease fungus), this protein is Pescadillo homolog.